The chain runs to 211 residues: Degradation in the endoplasmic reticulum protein 1 (211 aa).

Methionine 1 carries the post-translational modification N-acetylmethionine. The Cytoplasmic segment spans residues 1 to 14 (MDAVILNLLGDIPL). The helical transmembrane segment at 15–32 (VTRLWTIGCLVLSGLTSL) threads the bilayer. Residues 33–67 (RIVDPGKVVYSYDLVFKKGQYGRLLYSIFDYGAFN) are Lumenal-facing. The helical transmembrane segment at 68-85 (WISMINIFVSANHLSTLE) threads the bilayer. Over 86–92 (NSFNLRR) the chain is Cytoplasmic. The chain crosses the membrane as a helical span at residues 93 to 109 (KFCWIIFLLLVILVKMT). Residues 110–117 (SIEQPAAS) lie on the Lumenal side of the membrane. The helical transmembrane segment at 118–133 (LGVLLHENLVYYELKK) threads the bilayer. Residues 134–149 (NGNQMNVRFFGAIDVS) are Cytoplasmic-facing. Residues 150–165 (PSIFPIYMNAVMYFVY) traverse the membrane as a helical segment. The Lumenal portion of the chain corresponds to 166–168 (KRS). The chain crosses the membrane as a helical span at residues 169-189 (WLEIAMNFMPGHVIYYMDDII). Residues 190 to 211 (GKIYGIDLCKSPYDWFRNTETP) are Cytoplasmic-facing.

It belongs to the derlin family. Component of the HRD1 ubiquitin ligase complex which contains the E3 ligase HRD1, its cofactors HRD3, USA1 and DER1, substrate recruiting factor YOS9 and CDC48-binding protein UBX2. Within the complex, interacts with USA1 (via C-terminus). In ERAD-L, HRD3 and YOS9 jointly bind misfolded glycoproteins in the endoplasmic reticulum (ER) lumen. Movement of ERAD-L substrates through the ER membrane is facilitated by HRD1 and DER1 which have lateral gates facing each other and which distort the membrane region between the lateral gates, making it much thinner than a normal phospholipid bilayer. Substrates insert into the membrane as a hairpin loop with one strand interacting with DER1 and the other with HRD1. The HRD1 complex interacts with the heterotrimeric CDC48-NPL4-UFD1 ATPase complex which is recruited by UBX2 via its interaction with CDC48 and which moves ubiquitinated substrates to the cytosol for targeting to the proteasome. N-terminally acetylated by acetyltransferase NatB which enhances DER1 stability and is required for ERAD-L function.

The protein localises to the endoplasmic reticulum membrane. Its function is as follows. Component of the endoplasmic reticulum-associated degradation (ERAD) pathway. Specifically required for the ERAD-L pathway which mediates the degradation of proteins with misfolded lumenal domains within the endoplasmic reticulum (ER). Facilitates retrotranslocation of misfolded proteins from the ER lumen through the ER membrane in conjunction with HRD1. Both proteins have lateral gates facing each other and distort the membrane region between the lateral gates, making it much thinner than a normal phospholipid bilayer. Substrates insert into the membrane as a hairpin loop with one strand interacting with DER1 and the other with HRD1. The chain is Degradation in the endoplasmic reticulum protein 1 (DER1) from Saccharomyces cerevisiae (strain ATCC 204508 / S288c) (Baker's yeast).